Consider the following 464-residue polypeptide: ATP synthase subunit beta (464 aa).

153–160 (GGAGVGKT) contacts ATP.

It belongs to the ATPase alpha/beta chains family. In terms of assembly, F-type ATPases have 2 components, CF(1) - the catalytic core - and CF(0) - the membrane proton channel. CF(1) has five subunits: alpha(3), beta(3), gamma(1), delta(1), epsilon(1). CF(0) has three main subunits: a(1), b(2) and c(9-12). The alpha and beta chains form an alternating ring which encloses part of the gamma chain. CF(1) is attached to CF(0) by a central stalk formed by the gamma and epsilon chains, while a peripheral stalk is formed by the delta and b chains.

The protein localises to the cell inner membrane. It carries out the reaction ATP + H2O + 4 H(+)(in) = ADP + phosphate + 5 H(+)(out). In terms of biological role, produces ATP from ADP in the presence of a proton gradient across the membrane. The catalytic sites are hosted primarily by the beta subunits. The polypeptide is ATP synthase subunit beta (Burkholderia cenocepacia (strain ATCC BAA-245 / DSM 16553 / LMG 16656 / NCTC 13227 / J2315 / CF5610) (Burkholderia cepacia (strain J2315))).